The primary structure comprises 761 residues: MSQTPLVTEAEITAEGLKPQEYTEIVRRLGRHPNRAELGMFGVMWSEHCCYKNSRLLLKQFPTQGPRVLVGPGENAGVVDLGDGLRLAFKIESHNHPSAIEPFQGAATGVGGILRDIFTMGARPIALLNALRFGDLKEAKTQQLVKGVVAGIAHYGNCVGVPTVGGEVYFDPCYAGNPLVNAMALGLMETPEIVKSAASGIGNPVLYVGSTTGRDGMGGASFASAELTDESMSDRPAVQVGDPFVEKCLIEACLEAFQTGAVVAAQDMGAAGLTCSTSEMAAKGGVGIELDLDKVPVREQGMVPYEFLLSESQERMLFVAAQGREAELIEIFQRWGLQAVVVGRVIAEPLVRVLYRGEVAAEVPARALAEETPLYERECPKEPPAYVQQARQWSVDQLPLPARSPAEILLTLLATPSIASKAWVYRQYDHEVQNNTLVFPGDGDAAVIRLRGTAKGIAATVDCPSRYVYLDPYEGGKAAVAEAARNLSCVGAEPLAVTDNLNFGSPETPVGYWQLANACRGLAEACRALQTPVTGGNVSLYNETIDSNGQPQPIYPTPVVGMVGLIADLQRVVGQGWRATGDAIYLLGLPLTTPLSDPRLSLGGSEYLAQIHGLVAGCPPQIDLDLEQRVQAVCRYGIQQGWIASAHDLSEGGLAVALAESCLSGQRGATIQLPEGTYPRWDALLFAEGGARILVSVPPREQVAWEAYAQAQLPNAWTRLGVVNGEDTELCIDSCNNSPLIRVTIKELDLAWRSPLPKYLD.

Residue histidine 48 is part of the active site. Tyrosine 51 and lysine 90 together coordinate ATP. Glutamate 92 contacts Mg(2+). Substrate contacts are provided by residues 93-96 (SHNH) and arginine 115. Histidine 94 acts as the Proton acceptor in catalysis. A Mg(2+)-binding site is contributed by aspartate 116. Glutamine 239 contributes to the substrate binding site. Aspartate 267 contacts Mg(2+). A substrate-binding site is contributed by 311-313 (ESQ). ATP contacts are provided by aspartate 499 and glycine 536. Asparagine 537 contacts Mg(2+). Serine 539 provides a ligand contact to substrate.

The protein belongs to the FGAMS family. Monomer. Part of the FGAM synthase complex composed of 1 PurL, 1 PurQ and 2 PurS subunits.

The protein resides in the cytoplasm. The enzyme catalyses N(2)-formyl-N(1)-(5-phospho-beta-D-ribosyl)glycinamide + L-glutamine + ATP + H2O = 2-formamido-N(1)-(5-O-phospho-beta-D-ribosyl)acetamidine + L-glutamate + ADP + phosphate + H(+). The protein operates within purine metabolism; IMP biosynthesis via de novo pathway; 5-amino-1-(5-phospho-D-ribosyl)imidazole from N(2)-formyl-N(1)-(5-phospho-D-ribosyl)glycinamide: step 1/2. Part of the phosphoribosylformylglycinamidine synthase complex involved in the purines biosynthetic pathway. Catalyzes the ATP-dependent conversion of formylglycinamide ribonucleotide (FGAR) and glutamine to yield formylglycinamidine ribonucleotide (FGAM) and glutamate. The FGAM synthase complex is composed of three subunits. PurQ produces an ammonia molecule by converting glutamine to glutamate. PurL transfers the ammonia molecule to FGAR to form FGAM in an ATP-dependent manner. PurS interacts with PurQ and PurL and is thought to assist in the transfer of the ammonia molecule from PurQ to PurL. This chain is Phosphoribosylformylglycinamidine synthase subunit PurL, found in Thermosynechococcus vestitus (strain NIES-2133 / IAM M-273 / BP-1).